The chain runs to 607 residues: Elongation factor 4 (607 aa).

A tr-type G domain is found at 11-193; the sequence is GKIRNFSIIA…QIVEKVPAPT (183 aa). Residues 23–28 and 140–143 each bind GTP; these read DHGKST and NKID.

Belongs to the TRAFAC class translation factor GTPase superfamily. Classic translation factor GTPase family. LepA subfamily.

It localises to the cell membrane. The catalysed reaction is GTP + H2O = GDP + phosphate + H(+). Functionally, required for accurate and efficient protein synthesis under certain stress conditions. May act as a fidelity factor of the translation reaction, by catalyzing a one-codon backward translocation of tRNAs on improperly translocated ribosomes. Back-translocation proceeds from a post-translocation (POST) complex to a pre-translocation (PRE) complex, thus giving elongation factor G a second chance to translocate the tRNAs correctly. Binds to ribosomes in a GTP-dependent manner. The protein is Elongation factor 4 of Streptococcus pneumoniae (strain Taiwan19F-14).